A 323-amino-acid polypeptide reads, in one-letter code: tRNA U34 carboxymethyltransferase (323 aa).

Carboxy-S-adenosyl-L-methionine contacts are provided by residues K91, W105, K110, G130, 152–154 (DPT), 181–182 (IE), M196, Y200, and R315.

The protein belongs to the class I-like SAM-binding methyltransferase superfamily. CmoB family. As to quaternary structure, homotetramer.

The catalysed reaction is carboxy-S-adenosyl-L-methionine + 5-hydroxyuridine(34) in tRNA = 5-carboxymethoxyuridine(34) in tRNA + S-adenosyl-L-homocysteine + H(+). Catalyzes carboxymethyl transfer from carboxy-S-adenosyl-L-methionine (Cx-SAM) to 5-hydroxyuridine (ho5U) to form 5-carboxymethoxyuridine (cmo5U) at position 34 in tRNAs. This chain is tRNA U34 carboxymethyltransferase, found in Escherichia coli (strain K12 / MC4100 / BW2952).